A 678-amino-acid polypeptide reads, in one-letter code: ATP-dependent RNA helicase DHX58 (678 aa).

In terms of domain architecture, Helicase ATP-binding spans 11–188; it reads IMPALEGKNI…DGAINHVLQL (178 aa). ATP is bound at residue 24–31; that stretch reads LPTGAGKT. The DECH box signature appears at 131–134; sequence DECH. One can recognise a Helicase C-terminal domain in the interval 350-514; the sequence is KLEMLEKILQ…QAVAAVQKMD (165 aa). A coiled-coil region spans residues 489 to 546; that stretch reads ELKRELINEALETLMEQAVAAVQKMDQAEYQAKIRDLQQAALTKRAAQAAQRENQRQQ. The RLR CTR domain maps to 539-669; that stretch reads QRENQRQQFP…PDFDFLQHCA (131 aa). Zn(2+) contacts are provided by Cys-556, Cys-559, Cys-612, and Cys-615. An RNA-binding region spans residues 572–655; that stretch reads VEGTHHVNVN…RIQAKKWSRV (84 aa).

Belongs to the helicase family. RLR subfamily. Monomer in the absence of dsRNA. Homodimer in the presence of dsRNA. Interacts with RIGI (via CARD domain), MAVS/IPS1 and DDX60. Found in a complex with RIGI and IFIH1/MDA5. Interacts with ANKRD17. Directly interacts with ATG5 and ATG12, either as ATG5 and ATG12 monomers or as ATG12-ATG5 conjugates. In terms of assembly, (Microbial infection) Interacts (via helicase C-terminal domain) with non-structural protein V of paramyxoviruses including human parainfluenza 2 virus, human parainfluenza 5 virus, measles virus, mumps virus, hendra virus and nipah virus. Expressed in testis, nerve and spleen. Also expressed in the brain.

The protein localises to the cytoplasm. The catalysed reaction is ATP + H2O = ADP + phosphate + H(+). Functionally, acts as a regulator of RIGI and IFIH1/MDA5 mediated antiviral signaling. Cannot initiate antiviral signaling as it lacks the CARD domain required for activating MAVS/IPS1-dependent signaling events. Can have both negative and positive regulatory functions related to RIGI and IFIH1/MDA5 signaling and this role in regulating signaling may be complex and could probably depend on characteristics of the infecting virus or target cells, or both. Its inhibitory action on RIG-I signaling may involve the following mechanisms: competition with RIGI for binding to the viral RNA, binding to RIGI and inhibiting its dimerization and interaction with MAVS/IPS1, competing with IKBKE in its binding to MAVS/IPS1 thereby inhibiting activation of interferon regulatory factor 3 (IRF3). Its positive regulatory role may involve unwinding or stripping nucleoproteins of viral RNA thereby facilitating their recognition by RIGI and IFIH1/MDA5. Involved in the innate immune response to various RNA viruses and some DNA viruses such as poxviruses and coronavirus SARS-CoV-2, and also to the bacterial pathogen Listeria monocytogenes. Can bind both ssRNA and dsRNA, with a higher affinity for dsRNA. Shows a preference to 5'-triphosphorylated RNA, although it can recognize RNA lacking a 5'-triphosphate. The sequence is that of ATP-dependent RNA helicase DHX58 from Homo sapiens (Human).